The sequence spans 136 residues: Small ribosomal subunit protein uS9 (136 aa).

Residues 111-136 (TRDPRMKERKKTGQPGARKRFQFSKR) form a disordered region. A compositionally biased stretch (basic residues) spans 117-136 (KERKKTGQPGARKRFQFSKR).

It belongs to the universal ribosomal protein uS9 family.

The polypeptide is Small ribosomal subunit protein uS9 (Methylacidiphilum infernorum (isolate V4) (Methylokorus infernorum (strain V4))).